Consider the following 505-residue polypeptide: DEAD-box ATP-dependent RNA helicase 41 (505 aa).

The HIT-type zinc finger occupies 27–56; it reads GEPKCVICSRYGEYICDETNDDVCSLECKQ. Residues 110-138 carry the Q motif motif; the sequence is LTFTSCGLPPKLLLNLETAGYDFPTPIQM. Residues 141-318 enclose the Helicase ATP-binding domain; the sequence is IPAALTGKSL…GSLAKEIILV (178 aa). 154–161 serves as a coordination point for ATP; the sequence is ADTGSGKT. The DEAD box signature appears at 267-270; that stretch reads DEVD. The Helicase C-terminal domain maps to 342 to 492; sequence KKQKLFDILR…AIPKELINLT (151 aa).

Belongs to the DEAD box helicase family. DDX59 subfamily.

The catalysed reaction is ATP + H2O = ADP + phosphate + H(+). This Arabidopsis thaliana (Mouse-ear cress) protein is DEAD-box ATP-dependent RNA helicase 41 (RH41).